The sequence spans 725 residues: Kinesin-like protein KIN-8A (725 aa).

The segment at 1 to 32 (MPVSTRSKVMKQERNEQENTNLNLPLRNPHQG) is disordered. The Kinesin motor domain maps to 151–481 (RILVFVRLRP…LHWADRAKEI (331 aa)). Position 243–250 (243–250 (GATGAGKT)) interacts with ATP. 2 coiled-coil regions span residues 499-541 (EGAD…AANN) and 583-617 (ESLK…EHGL). Disordered regions lie at residues 652–672 (GSLR…RFAS) and 691–725 (SPAL…HMKH). The span at 655–665 (RPKEKEKELKS) shows a compositional bias: basic and acidic residues.

It belongs to the TRAFAC class myosin-kinesin ATPase superfamily. Kinesin family. KIN-8 subfamily.

This is Kinesin-like protein KIN-8A from Arabidopsis thaliana (Mouse-ear cress).